The chain runs to 549 residues: Hydroxylamine reductase (549 aa).

[4Fe-4S] cluster contacts are provided by Cys-5, Cys-8, Cys-17, and Cys-23. Hybrid [4Fe-2O-2S] cluster is bound by residues His-242, Glu-266, Cys-310, Cys-402, Cys-430, Cys-455, Glu-490, and Lys-492. The residue at position 402 (Cys-402) is a Cysteine persulfide.

Belongs to the HCP family. It depends on [4Fe-4S] cluster as a cofactor. The cofactor is hybrid [4Fe-2O-2S] cluster.

The protein resides in the cytoplasm. The catalysed reaction is A + NH4(+) + H2O = hydroxylamine + AH2 + H(+). Catalyzes the reduction of hydroxylamine to form NH(3) and H(2)O. The polypeptide is Hydroxylamine reductase (Clostridium novyi (strain NT)).